Here is a 180-residue protein sequence, read N- to C-terminus: Cytochrome b6-f complex iron-sulfur subunit 2 (180 aa).

The helical transmembrane segment at 21–43 threads the bilayer; sequence LLTFGTITGVAAGALYPAVKYLI. Residues 66-162 enclose the Rieske domain; it reads VTEFLASHNA…ATVTDDDKLV (97 aa). [2Fe-2S] cluster is bound by residues C108, H110, C126, and H129. A disulfide bridge connects residues C113 and C128.

It belongs to the Rieske iron-sulfur protein family. As to quaternary structure, the 4 large subunits of the cytochrome b6-f complex are cytochrome b6, subunit IV (17 kDa polypeptide, PetD), cytochrome f and the Rieske protein, while the 4 small subunits are PetG, PetL, PetM and PetN. The complex functions as a dimer. [2Fe-2S] cluster serves as cofactor.

The protein localises to the cellular thylakoid membrane. It carries out the reaction 2 oxidized [plastocyanin] + a plastoquinol + 2 H(+)(in) = 2 reduced [plastocyanin] + a plastoquinone + 4 H(+)(out). Its function is as follows. Component of the cytochrome b6-f complex, which mediates electron transfer between photosystem II (PSII) and photosystem I (PSI), cyclic electron flow around PSI, and state transitions. The protein is Cytochrome b6-f complex iron-sulfur subunit 2 of Synechocystis sp. (strain ATCC 27184 / PCC 6803 / Kazusa).